Consider the following 278-residue polypeptide: uncharacterized protein (278 aa).

Residues 1–20 (MSPLIVGTLIIILLSGLATA) form the signal peptide. The GPI-anchor amidated glycine moiety is linked to residue Gly-96. Residues 97–278 (TFLTSPTAKR…QLIMQTFNGS (182 aa)) constitute a propeptide, removed in mature form.

The protein resides in the cell membrane. This is an uncharacterized protein from Schizosaccharomyces pombe (strain 972 / ATCC 24843) (Fission yeast).